A 368-amino-acid polypeptide reads, in one-letter code: Cytochrome b (368 aa).

The next 4 membrane-spanning stretches (helical) occupy residues 33–53, 77–99, 112–132, and 178–198; these read FGSL…FLAM, WLIR…THTG, TWMV…LGYV, and FYAL…MHII. 2 residues coordinate heme b: H83 and H97. Positions 182 and 196 each coordinate heme b. H201 contributes to the a ubiquinone binding site. Helical transmembrane passes span 224–244, 288–308, 323–343, and 345–365; these read FSAK…SVVL, LGGV…PMMN, IAFW…SKPV, and SPFE…YMIM.

Belongs to the cytochrome b family. In terms of assembly, the main subunits of complex b-c1 are: cytochrome b, cytochrome c1 and the Rieske protein. It depends on heme b as a cofactor.

It is found in the mitochondrion inner membrane. Its function is as follows. Component of the ubiquinol-cytochrome c reductase complex (complex III or cytochrome b-c1 complex) that is part of the mitochondrial respiratory chain. The b-c1 complex mediates electron transfer from ubiquinol to cytochrome c. Contributes to the generation of a proton gradient across the mitochondrial membrane that is then used for ATP synthesis. The chain is Cytochrome b (mt:Cyt-b) from Bugula neritina (Brown bryozoan).